The sequence spans 326 residues: Polyprenal reductase (326 aa).

5 consecutive transmembrane segments (helical) span residues 26–46 (MMFGTFIATIVFFGGLMTFVE), 84–104 (HFYTFALFWSWLAFYVLVSTV), 167–187 (INLSHYAVGYVHYFGAVIALL), 212–232 (ILYLGVFFLAWQQQYASNMIL), and 256–276 (LFNLLSSPHMFLEVVMYFCIA).

The protein belongs to the steroid 5-alpha reductase family. Polyprenal reductase subfamily.

Its subcellular location is the endoplasmic reticulum membrane. It carries out the reaction a di-trans,poly-cis-dolichal + NADP(+) = a di-trans,poly-cis-polyprenal + NADPH + H(+). The protein operates within protein modification; protein glycosylation. In terms of biological role, plays a key role in early steps of protein N-linked glycosylation by being involved in the conversion of polyprenol into dolichol. Acts as a polyprenal reductase that mediates the reduction of polyprenal into dolichal in a NADP-dependent mechanism. Dolichols are required for the synthesis of dolichol-linked monosaccharides and the oligosaccharide precursor used for N-glycosylation. In Drosophila melanogaster (Fruit fly), this protein is Polyprenal reductase.